The sequence spans 554 residues: Beta-eudesmol synthase (554 aa).

Mg(2+) is bound by residues D305, D309, and E456. A DDXXD motif motif is present at residues 305–309 (DDIYD).

The protein belongs to the terpene synthase family. It depends on Mg(2+) as a cofactor. Mn(2+) is required as a cofactor. Expressed in rhizomes. Detected in stems, but not in leaves.

The protein resides in the cytoplasm. It carries out the reaction (2E,6E)-farnesyl diphosphate + H2O = beta-eudesmol + diphosphate. The enzyme catalyses (2E,6E)-farnesyl diphosphate + H2O = 10-epi-gamma-eudesmol + diphosphate. It catalyses the reaction (2E,6E)-farnesyl diphosphate + H2O = alpha-eudesmol + diphosphate. The protein operates within secondary metabolite biosynthesis; terpenoid biosynthesis. Involved in the biosynthesis of beta-eudesmol, a sesquiterpene with antifungal activity and responsible for resistance of plants to ant attack. Produces mainly beta-eudesmol, but also smaller amounts of 10-epi-gamma-eudesmol, alpha-eudesmol and aristolene. The polypeptide is Beta-eudesmol synthase (ZSS2) (Zingiber zerumbet (Shampoo ginger)).